The sequence spans 349 residues: Hydroxymethylglutaryl-CoA synthase (349 aa).

Asp-30 and Ala-31 together coordinate (3S)-3-hydroxy-3-methylglutaryl-CoA. Glu-82 acts as the Proton donor/acceptor in catalysis. (3S)-3-hydroxy-3-methylglutaryl-CoA contacts are provided by Cys-114 and Thr-155. Cys-114 (acyl-thioester intermediate) is an active-site residue. Arg-203 lines the CoA pocket. (3S)-3-hydroxy-3-methylglutaryl-CoA-binding residues include Thr-205 and His-238. His-238 acts as the Proton donor/acceptor in catalysis. Residue Lys-243 participates in CoA binding. (3S)-3-hydroxy-3-methylglutaryl-CoA-binding residues include Asn-270 and Ser-300.

Belongs to the thiolase-like superfamily. Archaeal HMG-CoA synthase family. Interacts with acetoacetyl-CoA thiolase that catalyzes the precedent step in the pathway and with a DUF35 protein. The acetoacetyl-CoA thiolase/HMG-CoA synthase complex channels the intermediate via a fused CoA-binding site, which allows for efficient coupling of the endergonic thiolase reaction with the exergonic HMGCS reaction.

The enzyme catalyses acetoacetyl-CoA + acetyl-CoA + H2O = (3S)-3-hydroxy-3-methylglutaryl-CoA + CoA + H(+). It functions in the pathway metabolic intermediate biosynthesis; (R)-mevalonate biosynthesis; (R)-mevalonate from acetyl-CoA: step 2/3. Functionally, catalyzes the condensation of acetyl-CoA with acetoacetyl-CoA to form 3-hydroxy-3-methylglutaryl-CoA (HMG-CoA). Functions in the mevalonate (MVA) pathway leading to isopentenyl diphosphate (IPP), a key precursor for the biosynthesis of isoprenoid compounds that are building blocks of archaeal membrane lipids. The sequence is that of Hydroxymethylglutaryl-CoA synthase from Methanococcus maripaludis (strain C6 / ATCC BAA-1332).